The sequence spans 1233 residues: Rho guanine nucleotide exchange factor 10-like protein (1233 aa).

The span at 1–10 shows a compositional bias: pro residues; it reads MASSNPPPQP. The disordered stretch occupies residues 1–93; that stretch reads MASSNPPPQP…GTGVPAWVSN (93 aa). Residues 26 to 46 show a composition bias toward acidic residues; sequence EAEDDPGEAFEFDDSDDEEDT. Residue serine 40 is modified to Phosphoserine. Positions 72–89 are enriched in low complexity; that stretch reads PVTDPDPAAAPPGTGVPA. A phosphotyrosine mark is found at tyrosine 131 and tyrosine 152. The disordered stretch occupies residues 159-193; it reads GAPRQAEDLGWSSSEFESYSEDSGEEAKPEVEPAK. The span at 183–193 shows a compositional bias: basic and acidic residues; sequence EEAKPEVEPAK. At serine 240 the chain carries Phosphoserine. In terms of domain architecture, DH spans 275-462; it reads VRRHILGSIV…ETLAEKLNEQ (188 aa). Over residues 1089–1104 the composition is skewed to basic and acidic residues; the sequence is QEEAEGPRAEEEKPDG. Disordered stretches follow at residues 1089-1117 and 1140-1161; these read QEEA…HVGR and PLLS…SEED.

Interacts with RHOA, RHOB and RHOC.

The protein resides in the cytoplasm. In terms of biological role, acts as a guanine nucleotide exchange factor (GEF) for RHOA, RHOB and RHOC. The protein is Rho guanine nucleotide exchange factor 10-like protein (ARHGEF10L) of Pongo abelii (Sumatran orangutan).